We begin with the raw amino-acid sequence, 1819 residues long: Gamma-tubulin complex component 6 (1819 aa).

Disordered regions lie at residues 810–889, 929–951, and 1000–1023; these read SEAH…GARP, LPPSAPGEAPAAASTQPSRPQEY, and RETLLPSHPPRRAALEEGSSQPTE. 9 tandem repeats follow at residues 1027–1053, 1054–1080, 1081–1107, 1108–1134, 1135–1161, 1162–1188, 1189–1215, 1216–1242, and 1243–1269. Residues 1027-1269 are 9 X 27 AA tandem repeats; the sequence is GQVSGGGLPT…VSTRPRWNTH (243 aa). The segment at 1271–1412 is disordered; the sequence is PIPPPHMVLG…EAEASAAEAQ (142 aa). Over residues 1297-1314 the composition is skewed to polar residues; it reads PPGHTSQSALSLGAQSTV. Residues 1321–1335 are compositionally biased toward low complexity; sequence LPVEVGPSLSSPSSG. The segment covering 1384 to 1398 has biased composition (polar residues); sequence WPLNSQEDTAAQSSP.

The protein belongs to the TUBGCP family. In terms of assembly, component of the gamma-tubulin ring complex (gTuRC) consisting of TUBGCP2, TUBGCP3, TUBGCP4, TUBGCP5 and TUBGCP6 and gamma-tubulin TUBG1 or TUBG2. TUBGCP2, TUBGCP3, TUBGCP4, TUBGCP5 and TUBGCP6 assemble in a 5:5:2:1:1 stoichiometry; each is associated with a gamma-tubulin, thereby arranging 14 gamma-tubulins in a helical manner. Gamma-tubulin at the first position is blocked by TUBGCP3 at the last position, allowing 13 protafilaments to grow into a microtubule. The gTuRC (via TUBGCP3 and TUBGCP6) interacts with ACTB and MZT1; the interactions form a luminal bridge that stabilizes the initial structure during complex assembly. The gTuRC (via TUBGCP2) interacts with MZT2A/MZT2B and CDK5RAP2 (via CM1 motif); the interactions play a role in gTuRC activation.

Its subcellular location is the cytoplasm. The protein resides in the cytoskeleton. It localises to the microtubule organizing center. It is found in the centrosome. In terms of biological role, component of the gamma-tubulin ring complex (gTuRC) which mediates microtubule nucleation. The gTuRC regulates the minus-end nucleation of alpha-beta tubulin heterodimers that grow into microtubule protafilaments, a critical step in centrosome duplication and spindle formation. This Homo sapiens (Human) protein is Gamma-tubulin complex component 6 (TUBGCP6).